Consider the following 235-residue polypeptide: Small ribosomal subunit protein uS2 (235 aa).

Belongs to the universal ribosomal protein uS2 family.

The protein is Small ribosomal subunit protein uS2 of Geobacillus thermodenitrificans (strain NG80-2).